The chain runs to 1297 residues: Insulin receptor-related protein (1297 aa).

An N-terminal signal peptide occupies residues 1–26 (MAVPSLWPWGACLPVIFLSLGFGLDT). Asparagine 47 carries an N-linked (GlcNAc...) asparagine glycan. Cystine bridges form between cysteine 214–cysteine 222, cysteine 216–cysteine 228, cysteine 229–cysteine 237, cysteine 233–cysteine 246, cysteine 249–cysteine 258, cysteine 262–cysteine 274, cysteine 280–cysteine 300, cysteine 304–cysteine 317, and cysteine 320–cysteine 324. The N-linked (GlcNAc...) asparagine glycan is linked to asparagine 311. Asparagine 411, asparagine 492, asparagine 528, asparagine 616, and asparagine 634 each carry an N-linked (GlcNAc...) asparagine glycan. 2 Fibronectin type-III domains span residues 483-603 (QTRT…TLPA) and 607-707 (VPQD…AQEA). Cysteine 657 and cysteine 864 are disulfide-bonded. Disordered regions lie at residues 666 to 687 (SNNDPRFDGEDGDPEAEMESDC) and 732 to 758 (SINKSPQRDSGRHRRAAGPLRLGGNSS). Positions 675-685 (EDGDPEAEMES) are enriched in acidic residues. Topologically, residues 747–921 (AAGPLRLGGN…PEEEDAGGLH (175 aa)) are extracellular. Asparagine 756, asparagine 885, and asparagine 898 each carry an N-linked (GlcNAc...) asparagine glycan. One can recognise a Fibronectin type-III 3 domain in the interval 818-913 (IPGKVAWEAS…SVAFYILGPE (96 aa)). The chain crosses the membrane as a helical span at residues 922–943 (VLLTATPVGLTLLIVLAALGFF). Over 944 to 1297 (YGKKRNRTLY…CSPQNGGPGH (354 aa)) the chain is Cytoplasmic. Positions 979–1254 (ISIIRELGQG…SIQEELRPSF (276 aa)) constitute a Protein kinase domain. Residues 985-993 (LGQGSFGMV) and lysine 1013 contribute to the ATP site. Aspartate 1115 (proton acceptor) is an active-site residue. Residues tyrosine 1145 and tyrosine 1146 each carry the phosphotyrosine; by autocatalysis modification. A disordered region spans residues 1267–1297 (GARGSLPTTDAEPDSSPTPRDCSPQNGGPGH). Over residues 1281 to 1297 (SSPTPRDCSPQNGGPGH) the composition is skewed to polar residues.

The protein belongs to the protein kinase superfamily. Tyr protein kinase family. Insulin receptor subfamily. In terms of assembly, probable tetramer of 2 alpha and 2 beta chains linked by disulfide bonds. The alpha chains contribute to the formation of the ligand-binding domain, while the beta chains carry the kinase domain. Post-translationally, autophosphorylated on tyrosine residues between pH 7.9 and pH 10.5.

Its subcellular location is the membrane. It catalyses the reaction L-tyrosyl-[protein] + ATP = O-phospho-L-tyrosyl-[protein] + ADP + H(+). Its function is as follows. Receptor with tyrosine-protein kinase activity. Functions as a pH sensing receptor which is activated by increased extracellular pH. Activates an intracellular signaling pathway that involves IRS1 and AKT1/PKB. The chain is Insulin receptor-related protein (INSRR) from Homo sapiens (Human).